The sequence spans 391 residues: MKIHEYQAKDILAKYGVAVPRGEVANTLEEAMDVAKRLFAEGAKGVVVKAQIHAGGRGKGGGVKVAKTLEEAEQYAKQILGMQLVTHQTGPQGQKVQRLLIEETAAIDRELYLGIVLDRAAAKLVFMASQAGGMEIEEVAAKDPSAIFKAYIDPAVGFQAYQARQLAFALGLKPTQINDAVKFMMGLYKAYMDTDASLLEINPFITTKDDKLFALDCKINFDDNAMFRHKDLKELRDIAEEDPLEVEASKYALNYIKLDGNIACMVNGAGLAMATMDIIQYAGGMPANFLDVGGGANQQQIEHAFEILLSDKNVQAVFINIFGGILRVDTLAHGVVGAAQKLNVKVPIVLRLEGTNVEEGRKILKDSGLNFIVGDTMQDAAQKVVAAAKGQ.

The ATP-grasp domain maps to 9–247 (KDILAKYGVA…IAEEDPLEVE (239 aa)). Residues lysine 49, 56-58 (GRG), glutamate 102, alanine 105, and glutamate 110 contribute to the ATP site. 2 residues coordinate Mg(2+): asparagine 202 and aspartate 216. Substrate is bound by residues asparagine 267 and 324 to 326 (GIL).

It belongs to the succinate/malate CoA ligase beta subunit family. Heterotetramer of two alpha and two beta subunits. Mg(2+) is required as a cofactor.

It carries out the reaction succinate + ATP + CoA = succinyl-CoA + ADP + phosphate. The catalysed reaction is GTP + succinate + CoA = succinyl-CoA + GDP + phosphate. It functions in the pathway carbohydrate metabolism; tricarboxylic acid cycle; succinate from succinyl-CoA (ligase route): step 1/1. Functionally, succinyl-CoA synthetase functions in the citric acid cycle (TCA), coupling the hydrolysis of succinyl-CoA to the synthesis of either ATP or GTP and thus represents the only step of substrate-level phosphorylation in the TCA. The beta subunit provides nucleotide specificity of the enzyme and binds the substrate succinate, while the binding sites for coenzyme A and phosphate are found in the alpha subunit. This chain is Succinate--CoA ligase [ADP-forming] subunit beta, found in Acidobacterium capsulatum (strain ATCC 51196 / DSM 11244 / BCRC 80197 / JCM 7670 / NBRC 15755 / NCIMB 13165 / 161).